Reading from the N-terminus, the 206-residue chain is Small ribosomal subunit protein uS4 (206 aa).

An S4 RNA-binding domain is found at 96 to 156; it reads GRLDNVVYRM…EKSKKQARIK (61 aa).

Belongs to the universal ribosomal protein uS4 family. As to quaternary structure, part of the 30S ribosomal subunit. Contacts protein S5. The interaction surface between S4 and S5 is involved in control of translational fidelity.

Functionally, one of the primary rRNA binding proteins, it binds directly to 16S rRNA where it nucleates assembly of the body of the 30S subunit. In terms of biological role, with S5 and S12 plays an important role in translational accuracy. The protein is Small ribosomal subunit protein uS4 of Histophilus somni (strain 129Pt) (Haemophilus somnus).